An 84-amino-acid polypeptide reads, in one-letter code: U7-ctenitoxin-Pn1a (84 aa).

Positions 1–17 are cleaved as a signal peptide; it reads MKLCILLVVLLITVVRA. The propeptide occupies 18 to 38; sequence EEDILENEAEDISPAIKERSA. Disulfide bonds link Cys41-Cys56, Cys48-Cys61, Cys55-Cys78, and Cys63-Cys76.

In terms of tissue distribution, expressed by the venom gland.

The protein localises to the secreted. Functionally, antagonist of L-type calcium channels (Cav1/CACNA1). Causes paralysis in the posterior limbs and gradual decreases in movement and aggression during 24 hours at dose levels of 5 ug per mouse. This chain is U7-ctenitoxin-Pn1a, found in Phoneutria nigriventer (Brazilian armed spider).